Consider the following 259-residue polypeptide: Ribonuclease HII (259 aa).

Positions 72 to 259 (ERIAGIDEAG…PVREALGVQS (188 aa)) constitute an RNase H type-2 domain. Asp78, Glu79, and Asp170 together coordinate a divalent metal cation.

Belongs to the RNase HII family. Mn(2+) serves as cofactor. The cofactor is Mg(2+).

It localises to the cytoplasm. It carries out the reaction Endonucleolytic cleavage to 5'-phosphomonoester.. Its function is as follows. Endonuclease that specifically degrades the RNA of RNA-DNA hybrids. This Geobacillus thermodenitrificans (strain NG80-2) protein is Ribonuclease HII.